The primary structure comprises 160 residues: Ribosomal RNA large subunit methyltransferase H (160 aa).

S-adenosyl-L-methionine is bound by residues Leu76 and Gly108.

It belongs to the RNA methyltransferase RlmH family. In terms of assembly, homodimer.

Its subcellular location is the cytoplasm. The catalysed reaction is pseudouridine(1915) in 23S rRNA + S-adenosyl-L-methionine = N(3)-methylpseudouridine(1915) in 23S rRNA + S-adenosyl-L-homocysteine + H(+). Functionally, specifically methylates the pseudouridine at position 1915 (m3Psi1915) in 23S rRNA. The sequence is that of Ribosomal RNA large subunit methyltransferase H from Rhodopseudomonas palustris (strain BisB18).